Here is a 160-residue protein sequence, read N- to C-terminus: 2-amino-4-hydroxy-6-hydroxymethyldihydropteridine pyrophosphokinase (160 aa).

This sequence belongs to the HPPK family.

The catalysed reaction is 6-hydroxymethyl-7,8-dihydropterin + ATP = (7,8-dihydropterin-6-yl)methyl diphosphate + AMP + H(+). It functions in the pathway cofactor biosynthesis; tetrahydrofolate biosynthesis; 2-amino-4-hydroxy-6-hydroxymethyl-7,8-dihydropteridine diphosphate from 7,8-dihydroneopterin triphosphate: step 4/4. Its function is as follows. Catalyzes the transfer of pyrophosphate from adenosine triphosphate (ATP) to 6-hydroxymethyl-7,8-dihydropterin, an enzymatic step in folate biosynthesis pathway. The sequence is that of 2-amino-4-hydroxy-6-hydroxymethyldihydropteridine pyrophosphokinase (folK) from Aquifex aeolicus (strain VF5).